The following is a 296-amino-acid chain: GTPase Era (296 aa).

The Era-type G domain occupies 7–174 (KAGYISIVGR…TEVIRHYLPE (168 aa)). The G1 stretch occupies residues 15–22 (GRPNVGKS). GTP is bound at residue 15 to 22 (GRPNVGKS). Residues 41–45 (QTTRH) form a G2 region. Residues 62–65 (DTPG) form a G3 region. GTP contacts are provided by residues 62 to 66 (DTPGF) and 123 to 126 (NKID). The G4 stretch occupies residues 123–126 (NKID). The segment at 153–155 (VSA) is G5. The region spanning 205–281 (IGEEVPYSVS…YLEIWVKVKS (77 aa)) is the KH type-2 domain.

This sequence belongs to the TRAFAC class TrmE-Era-EngA-EngB-Septin-like GTPase superfamily. Era GTPase family. Monomer.

It is found in the cytoplasm. The protein localises to the cell inner membrane. An essential GTPase that binds both GDP and GTP, with rapid nucleotide exchange. Plays a role in 16S rRNA processing and 30S ribosomal subunit biogenesis and possibly also in cell cycle regulation and energy metabolism. This chain is GTPase Era, found in Nitrosomonas eutropha (strain DSM 101675 / C91 / Nm57).